Reading from the N-terminus, the 279-residue chain is Shikimate dehydrogenase (NADP(+)) (279 aa).

Residues 19–21 and Thr-66 contribute to the shikimate site; that span reads SFS. The active-site Proton acceptor is the Lys-70. Position 82 (Glu-82) interacts with NADP(+). Residues Asn-91 and Asp-106 each coordinate shikimate. Residues 130–134 and Leu-222 each bind NADP(+); that span reads GSGGA. Residue Tyr-224 participates in shikimate binding. Position 245 (Gly-245) interacts with NADP(+).

The protein belongs to the shikimate dehydrogenase family. In terms of assembly, homodimer.

It carries out the reaction shikimate + NADP(+) = 3-dehydroshikimate + NADPH + H(+). The protein operates within metabolic intermediate biosynthesis; chorismate biosynthesis; chorismate from D-erythrose 4-phosphate and phosphoenolpyruvate: step 4/7. In terms of biological role, involved in the biosynthesis of the chorismate, which leads to the biosynthesis of aromatic amino acids. Catalyzes the reversible NADPH linked reduction of 3-dehydroshikimate (DHSA) to yield shikimate (SA). In Methanococcus maripaludis (strain C6 / ATCC BAA-1332), this protein is Shikimate dehydrogenase (NADP(+)).